The sequence spans 364 residues: Alanine racemase (364 aa).

K34 functions as the Proton acceptor; specific for D-alanine in the catalytic mechanism. Residue K34 is modified to N6-(pyridoxal phosphate)lysine. R129 provides a ligand contact to substrate. Y259 acts as the Proton acceptor; specific for L-alanine in catalysis. M307 provides a ligand contact to substrate.

This sequence belongs to the alanine racemase family. Pyridoxal 5'-phosphate serves as cofactor.

The catalysed reaction is L-alanine = D-alanine. Its pathway is amino-acid biosynthesis; D-alanine biosynthesis; D-alanine from L-alanine: step 1/1. In terms of biological role, catalyzes the interconversion of L-alanine and D-alanine. May also act on other amino acids. The polypeptide is Alanine racemase (alr) (Coxiella burnetii (strain Dugway 5J108-111)).